A 394-amino-acid chain; its full sequence is DNA replication and repair protein RecF (394 aa).

30-37 (GRNGFGKT) provides a ligand contact to ATP.

This sequence belongs to the RecF family.

It is found in the cytoplasm. The RecF protein is involved in DNA metabolism; it is required for DNA replication and normal SOS inducibility. RecF binds preferentially to single-stranded, linear DNA. It also seems to bind ATP. The sequence is that of DNA replication and repair protein RecF from Corynebacterium glutamicum (strain R).